The primary structure comprises 384 residues: 5-cytosine rRNA methyltransferase NSUN4 (384 aa).

A mitochondrion-targeting transit peptide spans 1 to 25 (MAALTLRGVRELLKRVDLATVPRRH). Residues Gly-185, Gly-186, Lys-187, and Asp-204 each coordinate S-adenosyl-L-methionine. Position 206 is a phosphoserine (Ser-206). Residues Arg-209, Asp-237, Gly-238, and Asp-255 each coordinate S-adenosyl-L-methionine. Cys-310 serves as the catalytic Nucleophile.

Belongs to the class I-like SAM-binding methyltransferase superfamily. RsmB/NOP family. Heterodimer with MTERFD2/MTERF4; this interaction seems to be required for NSUN4 recruitment to the mitochondrial large ribosomal subunit.

The protein localises to the mitochondrion. It catalyses the reaction a cytidine in rRNA + S-adenosyl-L-methionine = a 5-methylcytidine in rRNA + S-adenosyl-L-homocysteine + H(+). The catalysed reaction is a cytidine in mRNA + S-adenosyl-L-methionine = a 5-methylcytidine in mRNA + S-adenosyl-L-homocysteine + H(+). In terms of biological role, mitochondrial RNA cytosine C(5)-methyltransferase that methylates cytosine to 5-methylcytosine (m5C) in various RNAs, such as rRNAs, mRNAs and some long non-coding RNAs (lncRNAs). Involved in mitochondrial ribosome small subunit (SSU) maturation by catalyzing methylation of mitochondrial 12S rRNA; the function is independent of MTERFD2/MTERF4 and assembled mitochondrial ribosome large subunit (LSU). Targeted to LSU by MTERFD2/MTERF4 and probably is involved in a final step in ribosome biogenesis to ensure that SSU and LSU are assembled. In vitro can methylate 16S rRNA of the LSU; the methylation is enhanced by MTERFD/MTERF4. Also acts as a regulator of innate immunity by marking double-stranded mitochondrial RNAs(mt-dsRNAs) generated in response to stress: catalyzes m5C modification on mitochondrial RNAs, such as a mRNAs and lncRNAs, with a preference for the termini of light-strand lncRNAs, promoting their degradation and cytosolic release. Modified light-strand lncRNAs are then recognized by C1QBP reader and recruited to the mitochondrial degradosome complex, which promotes their degradation. This Homo sapiens (Human) protein is 5-cytosine rRNA methyltransferase NSUN4.